Reading from the N-terminus, the 151-residue chain is Arginine repressor (151 aa).

It belongs to the ArgR family.

Its subcellular location is the cytoplasm. It participates in amino-acid biosynthesis; L-arginine biosynthesis [regulation]. In terms of biological role, regulates arginine biosynthesis genes. This is Arginine repressor from Haemophilus influenzae (strain PittGG).